A 328-amino-acid polypeptide reads, in one-letter code: Biotin synthase (328 aa).

The 228-residue stretch at 48–275 folds into the Radical SAM core domain; the sequence is NRIQLSKLLN…KSHVRLTAGR (228 aa). Residues C63, C67, and C70 each coordinate [4Fe-4S] cluster. [2Fe-2S] cluster contacts are provided by C107, C138, C198, and R270.

It belongs to the radical SAM superfamily. Biotin synthase family. Homodimer. [4Fe-4S] cluster serves as cofactor. Requires [2Fe-2S] cluster as cofactor.

The enzyme catalyses (4R,5S)-dethiobiotin + (sulfur carrier)-SH + 2 reduced [2Fe-2S]-[ferredoxin] + 2 S-adenosyl-L-methionine = (sulfur carrier)-H + biotin + 2 5'-deoxyadenosine + 2 L-methionine + 2 oxidized [2Fe-2S]-[ferredoxin]. It participates in cofactor biosynthesis; biotin biosynthesis; biotin from 7,8-diaminononanoate: step 2/2. Catalyzes the conversion of dethiobiotin (DTB) to biotin by the insertion of a sulfur atom into dethiobiotin via a radical-based mechanism. This Brucella abortus (strain S19) protein is Biotin synthase.